Reading from the N-terminus, the 279-residue chain is 3-methyl-2-oxobutanoate hydroxymethyltransferase (279 aa).

Mg(2+) is bound by residues D43 and D82. 3-methyl-2-oxobutanoate is bound by residues 43–44, D82, and K112; that span reads DS. E114 serves as a coordination point for Mg(2+). The Proton acceptor role is filled by E181.

The protein belongs to the PanB family. Homodecamer; pentamer of dimers. It depends on Mg(2+) as a cofactor.

Its subcellular location is the cytoplasm. It catalyses the reaction 3-methyl-2-oxobutanoate + (6R)-5,10-methylene-5,6,7,8-tetrahydrofolate + H2O = 2-dehydropantoate + (6S)-5,6,7,8-tetrahydrofolate. The protein operates within cofactor biosynthesis; (R)-pantothenate biosynthesis; (R)-pantoate from 3-methyl-2-oxobutanoate: step 1/2. In terms of biological role, catalyzes the reversible reaction in which hydroxymethyl group from 5,10-methylenetetrahydrofolate is transferred onto alpha-ketoisovalerate to form ketopantoate. This Geobacillus thermodenitrificans (strain NG80-2) protein is 3-methyl-2-oxobutanoate hydroxymethyltransferase.